The primary structure comprises 78 residues: Consomatin Nc1 (78 aa).

Residues Met-1–Gly-22 form the signal peptide. Positions Gly-23 to Arg-59 are excised as a propeptide. Glu-61 bears the 4-carboxyglutamate mark. An intrachain disulfide couples Cys-62 to Cys-67. Position 64 is a D-tryptophan (Trp-64). Pro-70 is modified (4-hydroxyproline). A propeptide spanning residues Leu-71 to Gly-78 is cleaved from the precursor.

The protein belongs to the conotoxin C superfamily. Consomatin family. In terms of tissue distribution, expressed by the venom duct.

The protein resides in the secreted. Its function is as follows. Moderately activates human somatostatin receptors (SSTR) with a preferential activation of SSTR1 and SSTR4. In vivo, does not cause behavioral changes in mice within a few minutes of intracranial injection, but causes a progressive loss of movement thereafter. Four to five hours after injection, mice recover, even with the highest dose tested. Shows antinociception and antihyperalgesia activities in two mouse models of acute pain, most probably by acting outside the central nervous system. This Conus neocostatus (Cone snail) protein is Consomatin Nc1.